The sequence spans 1250 residues: TBC1 domain family member 9B (1250 aa).

GRAM domains are found at residues 142 to 209 (LKMR…EKNA) and 288 to 356 (ECYR…EKAD). Thr397 bears the Phosphothreonine mark. The disordered stretch occupies residues 397 to 443 (TPSKQPGSIGSRKASVVDPSTESSPAPQEGSEQPASPASPLSSRQSF). A phosphoserine mark is found at Ser411, Ser432, Ser435, and Ser463. Polar residues predominate over residues 414-443 (DPSTESSPAPQEGSEQPASPASPLSSRQSF). The Rab-GAP TBC domain occupies 508-695 (GIPESLRGEL…VIVDCFFYEG (188 aa)). A helical membrane pass occupies residues 668–688 (LSWFLTLFLSVMPFESAVVIV). The EF-hand domain maps to 879–914 (HTPLLAGRMFRLLDENKDSLINFKEFVTGMSGMYHG). Disordered stretches follow at residues 974 to 999 (LPQE…PDYR), 1069 to 1093 (SART…ELHQ), and 1128 to 1157 (VEGG…MSSY). Over residues 984-999 (SEERGEEKGTSSPDYR) the composition is skewed to basic and acidic residues. Ser1241 bears the Phosphoserine mark.

The protein resides in the membrane. May act as a GTPase-activating protein for Rab family protein(s). The polypeptide is TBC1 domain family member 9B (TBC1D9B) (Homo sapiens (Human)).